The sequence spans 289 residues: 3-hydroxy-16-methoxy-2,3-dihydrotabersonine N-methyltransferase (289 aa).

Positions Met71 to Gly80 are SAM motif I. The SAM motif II stretch occupies residues Gly134–Ile142. The SAM motif III stretch occupies residues Val161–Ile170. Positions Lys287–Ile289 match the Microbody targeting signal motif.

The protein belongs to the class I-like SAM-binding methyltransferase superfamily. gTMT family. In terms of assembly, homodimer. Mainly expressed in young leaves, and, to a lower extent, in mature leaves, flowers, stems and roots (at protein level).

It is found in the thylakoid. It localises to the peroxisome. It carries out the reaction (3R)-3-hydroxy-16-methoxy-2,3-dihydrotabersonine + S-adenosyl-L-methionine = deacetoxyvindoline + S-adenosyl-L-homocysteine + H(+). It participates in alkaloid biosynthesis; vindoline biosynthesis. Its activity is regulated as follows. Inhibited by gamma-tocopherol. In terms of biological role, S-adenosyl-L-methionine-dependent N-methyltransferase that catalyzes a nitrogen methylation involved in vindoline biosynthesis. Displays a strict requirement for a 2,3-dihydro bond in the aspidosperma skeleton. Can use 2,3-dihydrotabersonine, 2,3-dihydro-3-hydroxytabersonine and 2,3,6,7-tetraydro-3-hydroxytabersonine as substrates, but not tabersonine, vincadifformine, 21-hydroxycyclolochnericine, tryptamine, norharmane, harmaline, catharanthine, norajmaline, ajmaline, serpentine, ajmalicine, yohimbine or gamma-tocopherol. Inactive with picrinine as substrate. This is 3-hydroxy-16-methoxy-2,3-dihydrotabersonine N-methyltransferase from Catharanthus roseus (Madagascar periwinkle).